The chain runs to 143 residues: MEIRVFRQDDFEEVITLWERCDLLNPGVDPEVDIERKLTHDPDLFLVAEVVGEVVGTIMGGYDGHRGSAYYLGVHPEFRGRGIANALIARLEKKLIARGCPKIVLIVPEDNDATIYMCEKLEYEDRHQESVIFSKRLIVDQEY.

The 138-residue stretch at 1–138 folds into the N-acetyltransferase domain; that stretch reads MEIRVFRQDD…ESVIFSKRLI (138 aa).

Belongs to the acetyltransferase family. YpeA subfamily.

The chain is Acetyltransferase plu1384 from Photorhabdus laumondii subsp. laumondii (strain DSM 15139 / CIP 105565 / TT01) (Photorhabdus luminescens subsp. laumondii).